We begin with the raw amino-acid sequence, 390 residues long: Cold-responsive protein kinase 1 (390 aa).

The Protein kinase domain maps to 41–320 (FSAENKIGEG…VRLLTGEKDI (280 aa)). ATP contacts are provided by residues 47-55 (IGEGGFGSV) and K69. A Phosphotyrosine modification is found at Y114. The active-site Proton acceptor is D169. Residues S173 and S202 each carry the phosphoserine modification. Residues T203 and T208 each carry the phosphothreonine modification. Y216 is subject to Phosphotyrosine. A disordered region spans residues 345–390 (TKTEQVNRQNYTNPSSSSNGSSRDHSNAYSSGASSANAGNTFSSTI). Positions 354–390 (NYTNPSSSSNGSSRDHSNAYSSGASSANAGNTFSSTI) are enriched in low complexity.

Belongs to the protein kinase superfamily. Ser/Thr protein kinase family. Interacts with and phosphorylates 14-3-3 proteins. Binds to GRF6 at the plasma membrane. Post-translationally, autophosphorylated.

It localises to the cell membrane. The enzyme catalyses L-seryl-[protein] + ATP = O-phospho-L-seryl-[protein] + ADP + H(+). It carries out the reaction L-threonyl-[protein] + ATP = O-phospho-L-threonyl-[protein] + ADP + H(+). Activated by cold. Its function is as follows. Negative regulator of freezing tolerance that phosphorylates 14-3-3 proteins (e.g. GRF6) thus triggering their translocation from the cytosol to the nucleus in response to cold stress. This chain is Cold-responsive protein kinase 1, found in Arabidopsis thaliana (Mouse-ear cress).